A 520-amino-acid chain; its full sequence is Bifunctional purine biosynthesis protein PurH (520 aa).

An MGS-like domain is found at 1 to 146 (MAPVALLSVS…KNHADVAVLT (146 aa)).

This sequence belongs to the PurH family.

It carries out the reaction (6R)-10-formyltetrahydrofolate + 5-amino-1-(5-phospho-beta-D-ribosyl)imidazole-4-carboxamide = 5-formamido-1-(5-phospho-D-ribosyl)imidazole-4-carboxamide + (6S)-5,6,7,8-tetrahydrofolate. It catalyses the reaction IMP + H2O = 5-formamido-1-(5-phospho-D-ribosyl)imidazole-4-carboxamide. The protein operates within purine metabolism; IMP biosynthesis via de novo pathway; 5-formamido-1-(5-phospho-D-ribosyl)imidazole-4-carboxamide from 5-amino-1-(5-phospho-D-ribosyl)imidazole-4-carboxamide (10-formyl THF route): step 1/1. It participates in purine metabolism; IMP biosynthesis via de novo pathway; IMP from 5-formamido-1-(5-phospho-D-ribosyl)imidazole-4-carboxamide: step 1/1. This is Bifunctional purine biosynthesis protein PurH from Synechococcus sp. (strain CC9605).